Reading from the N-terminus, the 1146-residue chain is ATP-dependent helicase/deoxyribonuclease subunit B (1146 aa).

One can recognise a UvrD-like helicase ATP-binding domain in the interval M1–S280. G8–T15 lines the ATP pocket. In terms of domain architecture, UvrD-like helicase C-terminal spans L276–S584. The [4Fe-4S] cluster site is built by C786, C1105, C1108, and C1114.

Belongs to the helicase family. AddB/RexB type 1 subfamily. Heterodimer of AddA and AddB. Mg(2+) serves as cofactor. Requires [4Fe-4S] cluster as cofactor.

Functionally, the heterodimer acts as both an ATP-dependent DNA helicase and an ATP-dependent, dual-direction single-stranded exonuclease. Recognizes the chi site generating a DNA molecule suitable for the initiation of homologous recombination. The AddB subunit has 5' -&gt; 3' nuclease activity but not helicase activity. This chain is ATP-dependent helicase/deoxyribonuclease subunit B, found in Acetivibrio thermocellus (strain ATCC 27405 / DSM 1237 / JCM 9322 / NBRC 103400 / NCIMB 10682 / NRRL B-4536 / VPI 7372) (Clostridium thermocellum).